Here is a 154-residue protein sequence, read N- to C-terminus: Bacterial ferritin (154 aa).

Residues Met-1–Gly-145 form the Ferritin-like diiron domain. Fe cation-binding residues include Glu-18, Glu-51, His-54, Glu-93, Glu-127, and His-130.

This sequence belongs to the bacterioferritin family. In terms of assembly, heterooligomer of 24 subunits, arranged as 12 dimers, that are packed together to form an approximately spherical molecule with a central cavity, in which large amounts of iron can be deposited.

It catalyses the reaction 4 Fe(2+) + O2 + 4 H(+) = 4 Fe(3+) + 2 H2O. The enzyme catalyses Fe(2+)(in) = Fe(2+)(out). Iron-storage protein, whose ferroxidase center binds Fe(2+), oxidizes it using dioxygen to Fe(3+), and participates in the subsequent Fe(3+) oxide mineral core formation within the central cavity of the BFR protein shell. The chain is Bacterial ferritin (bfrA) from Neisseria meningitidis serogroup A / serotype 4A (strain DSM 15465 / Z2491).